The sequence spans 499 residues: Rhodopsin, GQ-coupled (499 aa).

Residues 1 to 50 (MADNKSTLPGLPDINGTLNRSMTPNTGWEGPYDMSVHLHWTQFPPVTEEW) lie on the Extracellular side of the membrane. N-linked (GlcNAc...) asparagine glycosylation is found at Asn4, Asn15, and Asn19. Residues 51–75 (HYIIGVYITIVGLLGIMGNTTVVYI) traverse the membrane as a helical segment. At 76-87 (FSNTKSLRSPSN) the chain is on the cytoplasmic side. A helical membrane pass occupies residues 88–114 (LFVVNLAVSDLIFSAVNGFPLLTVSSF). Over 115 to 128 (HQKWIFGSLFCQLY) the chain is Extracellular. A disulfide bond links Cys125 and Cys203. Residues 129 to 148 (GFVGGVFGLMSINTLTAISI) traverse the membrane as a helical segment. Over 149–168 (DRYVVITKPLQASQTMTRRK) the chain is Cytoplasmic. Residues 169–192 (VHLMIVIVWVLSILLSIPPFFGWG) traverse the membrane as a helical segment. The Extracellular portion of the chain corresponds to 193 to 216 (AYIPEGFQTSCTFDYLTKTARTRT). A helical transmembrane segment spans residues 217–244 (YIVVLYLFGFLIPLIIIGVCYVLIIRGV). Residues 245–278 (RRHDQKMLTITRSMKTEDARANNKRARSELRISK) are Cytoplasmic-facing. A helical transmembrane segment spans residues 279–302 (IAMTVTCLFIISWSPYAIIALIAQ). Over 303–310 (FGPAHWIT) the chain is Extracellular. The helical transmembrane segment at 311–335 (PLVSELPMMLAKSSSMHNPVVYALS) threads the bilayer. At Lys322 the chain carries N6-(retinylidene)lysine. Topologically, residues 336–499 (HPKFRKALYQ…QRVNGLTFNS (164 aa)) are cytoplasmic. 2 S-palmitoyl cysteine lipidation sites follow: Cys353 and Cys354.

It belongs to the G-protein coupled receptor 1 family. Opsin subfamily. Post-translationally, phosphorylated on some or all of the serine and threonine residues present in the C-terminal region. As to expression, retina. Expressed in the depolarizing cell layer of the photoreceptor cells distant from the lens.

Its subcellular location is the membrane. Its function is as follows. Visual pigments such as rhodopsin and porphyropsin are light-absorbing molecules that mediate vision. Rhodopsin consists of an apoprotein, opsin, covalently linked to 11-cis-retinal. This receptor is coupled to the activation of phospholipase C. Porphyropsin consists of opsin covalently linked to 11-cis 3,4-didehydroretinal. The protein is Rhodopsin, GQ-coupled (SCOP1) of Mizuhopecten yessoensis (Japanese scallop).